The following is a 234-amino-acid chain: Sugar fermentation stimulation protein homolog (234 aa).

The protein belongs to the SfsA family.

This is Sugar fermentation stimulation protein homolog from Shewanella halifaxensis (strain HAW-EB4).